We begin with the raw amino-acid sequence, 65 residues long: uncharacterized protein (65 aa).

It is found in the plastid. The protein resides in the chloroplast. This is an uncharacterized protein from Porphyra purpurea (Red seaweed).